Reading from the N-terminus, the 377-residue chain is cAMP-dependent protein kinase type II regulatory subunit (377 aa).

The span at 48-69 (ERPSVSHTDQSTDDQLSVNSQD) shows a compositional bias: polar residues. Residues 48–78 (ERPSVSHTDQSTDDQLSVNSQDADAEPPVMA) are disordered. S51, S58, S64, S67, and S84 each carry phosphoserine. A Pseudophosphorylation motif motif is present at residues 81–85 (RRKSV). At Y90 the chain carries Phosphotyrosine. 3',5'-cyclic AMP is bound by residues 124–239 (LFRS…LLNS), E189, R198, 242–362 (MLKA…YESQ), E311, and R320.

This sequence belongs to the cAMP-dependent kinase regulatory chain family. As to quaternary structure, tetramer, composed of 2 regulatory (R) and 2 catalytic (C) subunits. In the presence of cAMP it dissociates into 2 active monomeric C subunits and an R dimer. Interacts with Akap200. Post-translationally, the pseudophosphorylation site binds to the substrate-binding region of the catalytic chain but is not phosphorylated. The physiological significance of phosphorylations by other kinases is unclear. Detected in follicle cells, germline-derived cells, germline line stem cells and outer rim of ring canals of nurse cells throughout oogenesis (at protein level).

The protein localises to the cytoplasm. The protein resides in the cell membrane. Functionally, regulatory subunit of the cAMP-dependent protein kinases involved in cAMP signaling in cells. Mediates membrane association by binding to anchoring proteins, such as Akap200. Might play an essential role in the regulation of neuronal activity in the brain. In Drosophila melanogaster (Fruit fly), this protein is cAMP-dependent protein kinase type II regulatory subunit (Pka-R2).